A 359-amino-acid chain; its full sequence is Peptide chain release factor 1 (359 aa).

Gln236 bears the N5-methylglutamine mark.

This sequence belongs to the prokaryotic/mitochondrial release factor family. Methylated by PrmC. Methylation increases the termination efficiency of RF1.

Its subcellular location is the cytoplasm. Its function is as follows. Peptide chain release factor 1 directs the termination of translation in response to the peptide chain termination codons UAG and UAA. This chain is Peptide chain release factor 1, found in Streptococcus agalactiae.